A 130-amino-acid polypeptide reads, in one-letter code: Ribosome-binding factor A (130 aa).

The protein belongs to the RbfA family. Monomer. Binds 30S ribosomal subunits, but not 50S ribosomal subunits or 70S ribosomes.

It localises to the cytoplasm. One of several proteins that assist in the late maturation steps of the functional core of the 30S ribosomal subunit. Associates with free 30S ribosomal subunits (but not with 30S subunits that are part of 70S ribosomes or polysomes). Required for efficient processing of 16S rRNA. May interact with the 5'-terminal helix region of 16S rRNA. The sequence is that of Ribosome-binding factor A from Prochlorococcus marinus (strain MIT 9215).